The primary structure comprises 349 residues: SUMO-activating enzyme subunit 1 (349 aa).

Met1 bears the N-acetylmethionine mark. Val2 is subject to N-acetylvaline; in SUMO-activating enzyme subunit 1, N-terminally processed. Position 15 is a phosphoserine (Ser15). Lys201 is modified (N6-acetyllysine).

The protein belongs to the ubiquitin-activating E1 family. As to quaternary structure, heterodimer of SAE1 and UBA2/SAE2. The heterodimer corresponds to the two domains that are encoded on a single polypeptide chain in ubiquitin-activating enzyme E1. Interacts with UBE2I.

Its subcellular location is the nucleus. It functions in the pathway protein modification; protein sumoylation. Its function is as follows. The heterodimer acts as an E1 ligase for SUMO1, SUMO2, SUMO3, and probably SUMO4. It mediates ATP-dependent activation of SUMO proteins followed by formation of a thioester bond between a SUMO protein and a conserved active site cysteine residue on UBA2/SAE2. In Rattus norvegicus (Rat), this protein is SUMO-activating enzyme subunit 1 (Sae1).